The sequence spans 342 residues: Succinylglutamate desuccinylase (342 aa).

H63, E66, and H155 together coordinate Zn(2+). Residue E219 is part of the active site.

This sequence belongs to the AspA/AstE family. Succinylglutamate desuccinylase subfamily. It depends on Zn(2+) as a cofactor.

The enzyme catalyses N-succinyl-L-glutamate + H2O = L-glutamate + succinate. It participates in amino-acid degradation; L-arginine degradation via AST pathway; L-glutamate and succinate from L-arginine: step 5/5. Transforms N(2)-succinylglutamate into succinate and glutamate. In Vibrio parahaemolyticus serotype O3:K6 (strain RIMD 2210633), this protein is Succinylglutamate desuccinylase.